The following is a 278-amino-acid chain: Bifunctional protein FolD (278 aa).

NADP(+) contacts are provided by residues 165–167 (GRS), serine 190, and threonine 231.

The protein belongs to the tetrahydrofolate dehydrogenase/cyclohydrolase family. As to quaternary structure, homodimer.

It carries out the reaction (6R)-5,10-methylene-5,6,7,8-tetrahydrofolate + NADP(+) = (6R)-5,10-methenyltetrahydrofolate + NADPH. The enzyme catalyses (6R)-5,10-methenyltetrahydrofolate + H2O = (6R)-10-formyltetrahydrofolate + H(+). It functions in the pathway one-carbon metabolism; tetrahydrofolate interconversion. Catalyzes the oxidation of 5,10-methylenetetrahydrofolate to 5,10-methenyltetrahydrofolate and then the hydrolysis of 5,10-methenyltetrahydrofolate to 10-formyltetrahydrofolate. This chain is Bifunctional protein FolD, found in Clostridium acetobutylicum (strain ATCC 824 / DSM 792 / JCM 1419 / IAM 19013 / LMG 5710 / NBRC 13948 / NRRL B-527 / VKM B-1787 / 2291 / W).